Here is a 225-residue protein sequence, read N- to C-terminus: ATP-dependent dethiobiotin synthetase BioD (225 aa).

12 to 17 (EVGKTY) contributes to the ATP binding site. Threonine 16 serves as a coordination point for Mg(2+). The active site involves lysine 37. Serine 41 serves as a coordination point for substrate. ATP-binding positions include aspartate 52, 114–117 (EGAG), and 174–175 (NC). Positions 52 and 114 each coordinate Mg(2+).

The protein belongs to the dethiobiotin synthetase family. As to quaternary structure, homodimer. Requires Mg(2+) as cofactor.

Its subcellular location is the cytoplasm. The enzyme catalyses (7R,8S)-7,8-diammoniononanoate + CO2 + ATP = (4R,5S)-dethiobiotin + ADP + phosphate + 3 H(+). It participates in cofactor biosynthesis; biotin biosynthesis; biotin from 7,8-diaminononanoate: step 1/2. Its function is as follows. Catalyzes a mechanistically unusual reaction, the ATP-dependent insertion of CO2 between the N7 and N8 nitrogen atoms of 7,8-diaminopelargonic acid (DAPA, also called 7,8-diammoniononanoate) to form a ureido ring. The chain is ATP-dependent dethiobiotin synthetase BioD from Francisella tularensis subsp. mediasiatica (strain FSC147).